Reading from the N-terminus, the 417-residue chain is Gamma-glutamyl phosphate reductase (417 aa).

This sequence belongs to the gamma-glutamyl phosphate reductase family.

The protein localises to the cytoplasm. The enzyme catalyses L-glutamate 5-semialdehyde + phosphate + NADP(+) = L-glutamyl 5-phosphate + NADPH + H(+). Its pathway is amino-acid biosynthesis; L-proline biosynthesis; L-glutamate 5-semialdehyde from L-glutamate: step 2/2. In terms of biological role, catalyzes the NADPH-dependent reduction of L-glutamate 5-phosphate into L-glutamate 5-semialdehyde and phosphate. The product spontaneously undergoes cyclization to form 1-pyrroline-5-carboxylate. The protein is Gamma-glutamyl phosphate reductase of Photorhabdus laumondii subsp. laumondii (strain DSM 15139 / CIP 105565 / TT01) (Photorhabdus luminescens subsp. laumondii).